The following is a 328-amino-acid chain: UPF0421 protein SAV1889 (328 aa).

4 helical membrane passes run 19-39, 61-81, 108-128, and 132-152; these read IAIF…IYAI, LPAT…FGDQ, VAVL…IFNF, and TLTA…VFPP.

It belongs to the UPF0421 family.

It is found in the cell membrane. In Staphylococcus aureus (strain Mu50 / ATCC 700699), this protein is UPF0421 protein SAV1889.